The following is a 147-amino-acid chain: MERVNNYKLCVALLIISMVMAMAAAQSATNVRSTYHLYNPQNINWDLRAASAFCATWDADKPLAWRQKYGWTAFCGPAGPRGQDSCGRCLRVTNTGTGTQTTVRIVDQCSNGGLDLDVNVFNQLDTNGVGYQQGHLTVNYEFVNCND.

A signal peptide spans 1 to 25; that stretch reads MERVNNYKLCVALLIISMVMAMAAA. The Barwin domain occupies 26 to 147; the sequence is QSATNVRSTY…VNYEFVNCND (122 aa). 3 disulfide bridges follow: C54–C86, C75–C109, and C89–C145.

It localises to the secreted. The protein resides in the cell wall. In Nicotiana tabacum (Common tobacco), this protein is Pathogenesis-related protein PR-4A.